The following is a 153-amino-acid chain: Fucose mutarotase (153 aa).

His-24 serves as the catalytic Proton donor. Substrate is bound at residue Asp-32. Asp-69 is an active-site residue. 4 residues coordinate substrate: Met-79, Tyr-119, Tyr-137, and Asn-139. Residue Tyr-119 is part of the active site.

It belongs to the RbsD / FucU family. In terms of assembly, mainly homodimer, but also exists as homotetramer, homooctamer, and homodecamer. The homodimeric form seems catalytically inactive.

It carries out the reaction alpha-L-fucose = beta-L-fucose. Its pathway is carbohydrate metabolism; L-fucose metabolism. Its function is as follows. Involved in the interconversion between alpha- and beta-L-fucoses. L-Fucose (6-deoxy-L-galactose) exists as alpha-L-fucose (29.5%) and beta-L-fucose (70.5%), the beta-form is metabolized through the salvage pathway. GDP-L-fucose formed either by the de novo or salvage pathways is transported into the endoplasmic reticulum, where it serves as a substrate for N- and O-glycosylations by fucosyltransferases. Fucosylated structures expressed on cell surfaces or secreted in biological fluids are believed to play a critical role in cell-cell adhesion and recognition processes. In Bos taurus (Bovine), this protein is Fucose mutarotase (FUOM).